A 622-amino-acid polypeptide reads, in one-letter code: Chaperone protein HscA homolog (622 aa).

Belongs to the heat shock protein 70 family.

Chaperone involved in the maturation of iron-sulfur cluster-containing proteins. Has a low intrinsic ATPase activity which is markedly stimulated by HscB. This chain is Chaperone protein HscA homolog, found in Burkholderia thailandensis (strain ATCC 700388 / DSM 13276 / CCUG 48851 / CIP 106301 / E264).